Consider the following 357-residue polypeptide: Peptide chain release factor 1 (357 aa).

Glutamine 233 is modified (N5-methylglutamine).

Belongs to the prokaryotic/mitochondrial release factor family. Methylated by PrmC. Methylation increases the termination efficiency of RF1.

Its subcellular location is the cytoplasm. Peptide chain release factor 1 directs the termination of translation in response to the peptide chain termination codons UAG and UAA. This Syntrophus aciditrophicus (strain SB) protein is Peptide chain release factor 1.